Consider the following 551-residue polypeptide: Xylulose kinase (551 aa).

Substrate-binding residues include histidine 114, arginine 185, aspartate 295, and asparagine 296. ATP is bound by residues tryptophan 370, 456-457 (GA), and asparagine 460.

This sequence belongs to the FGGY kinase family. Monomer.

The enzyme catalyses D-xylulose + ATP = D-xylulose 5-phosphate + ADP + H(+). Functionally, phosphorylates D-xylulose to produce D-xylulose 5-phosphate, a molecule that may play an important role in the regulation of glucose metabolism and lipogenesis. The sequence is that of Xylulose kinase (Xylb) from Mus musculus (Mouse).